We begin with the raw amino-acid sequence, 517 residues long: ATP synthase subunit alpha (517 aa).

174–181 contributes to the ATP binding site; sequence GDRQTGKT.

This sequence belongs to the ATPase alpha/beta chains family. As to quaternary structure, F-type ATPases have 2 components, CF(1) - the catalytic core - and CF(0) - the membrane proton channel. CF(1) has five subunits: alpha(3), beta(3), gamma(1), delta(1), epsilon(1). CF(0) has three main subunits: a(1), b(2) and c(9-12). The alpha and beta chains form an alternating ring which encloses part of the gamma chain. CF(1) is attached to CF(0) by a central stalk formed by the gamma and epsilon chains, while a peripheral stalk is formed by the delta and b chains.

The protein localises to the cell inner membrane. The catalysed reaction is ATP + H2O + 4 H(+)(in) = ADP + phosphate + 5 H(+)(out). Functionally, produces ATP from ADP in the presence of a proton gradient across the membrane. The alpha chain is a regulatory subunit. The polypeptide is ATP synthase subunit alpha (Polaromonas sp. (strain JS666 / ATCC BAA-500)).